Here is a 145-residue protein sequence, read N- to C-terminus: uncharacterized protein (145 aa).

Residues 1 to 145 enclose the CBM3 domain; sequence LQYRAADTNA…NGQIVWGTAP (145 aa).

This is an uncharacterized protein from Paenibacillus lautus (Bacillus lautus).